Here is a 179-residue protein sequence, read N- to C-terminus: Large ribosomal subunit protein uL5 (179 aa).

Belongs to the universal ribosomal protein uL5 family. Part of the 50S ribosomal subunit; part of the 5S rRNA/L5/L18/L25 subcomplex. Contacts the 5S rRNA and the P site tRNA. Forms a bridge to the 30S subunit in the 70S ribosome.

This is one of the proteins that bind and probably mediate the attachment of the 5S RNA into the large ribosomal subunit, where it forms part of the central protuberance. In the 70S ribosome it contacts protein S13 of the 30S subunit (bridge B1b), connecting the 2 subunits; this bridge is implicated in subunit movement. Contacts the P site tRNA; the 5S rRNA and some of its associated proteins might help stabilize positioning of ribosome-bound tRNAs. The chain is Large ribosomal subunit protein uL5 from Marinobacter nauticus (strain ATCC 700491 / DSM 11845 / VT8) (Marinobacter aquaeolei).